The primary structure comprises 95 residues: Integration host factor subunit beta (95 aa).

The disordered stretch occupies residues Arg59 to Ser95. The segment covering Leu72–Ser95 has biased composition (basic and acidic residues).

It belongs to the bacterial histone-like protein family. Heterodimer of an alpha and a beta chain.

This protein is one of the two subunits of integration host factor, a specific DNA-binding protein that functions in genetic recombination as well as in transcriptional and translational control. In Ectopseudomonas mendocina (strain ymp) (Pseudomonas mendocina), this protein is Integration host factor subunit beta.